A 529-amino-acid polypeptide reads, in one-letter code: Glycerol kinase 5 (529 aa).

ATP contacts are provided by Ser28 and Ser29. 3 residues coordinate glycerol: Arg98, Asp275, and Gln276. Positions 297, 340, and 440 each coordinate ATP.

This sequence belongs to the FGGY kinase family.

It is found in the cytoplasm. It carries out the reaction glycerol + ATP = sn-glycerol 3-phosphate + ADP + H(+). It functions in the pathway polyol metabolism; glycerol degradation via glycerol kinase pathway; sn-glycerol 3-phosphate from glycerol: step 1/1. Its function is as follows. Skin-specific kinase that plays a key role in glycerol metabolism, catalyzing its phosphorylation to produce sn-glycerol 3-phosphate. Involved in skin-specific regulation of sterol regulatory element-binding protein (SREBP) processing and lipid biosynthesis. The sequence is that of Glycerol kinase 5 from Homo sapiens (Human).